The primary structure comprises 895 residues: Ras and Rab interactor 2 (895 aa).

An SH2 domain is found at 97 to 190 (WLQLSLSEEE…VLPFTLKLPY (94 aa)). The tract at residues 284 to 361 (LSGGLKRPST…KPTPIPPPRL (78 aa)) is disordered. Pro residues predominate over residues 306–315 (SPPPRPPPPA). A compositionally biased stretch (polar residues) spans 328-338 (TETQTSMPETV). The residue at position 366 (S366) is a Phosphoserine. Disordered regions lie at residues 373–442 (GAKT…SDSL) and 460–481 (SLED…KSKK). Residues 430-441 (SDMSISTSSSDS) show a composition bias toward low complexity. Position 501 is a phosphoserine (S501). The residue at position 509 (T509) is a Phosphothreonine. The VPS9 domain occupies 618 to 757 (DGSWKQLKEN…IKNFQEEQAA (140 aa)). Residues 787–878 (FQNYLRVAFQ…FHFVYKRIKN (92 aa)) form the Ras-associating domain.

This sequence belongs to the RIN (Ras interaction/interference) family. As to quaternary structure, homotetramer; probably composed of anti-parallel linkage of two parallel dimers. Interacts with Ras. Interacts with RAB5B, with a much higher affinity for GTP-bound activated RAB5B. Does not interact with other members of the Rab family. As to expression, widely expressed. Expressed in heart, kidney, lung placenta. Expressed at low level in skeletal muscle, spleen and peripheral blood.

Its subcellular location is the cytoplasm. In terms of biological role, ras effector protein. May function as an upstream activator and/or downstream effector for RAB5B in endocytic pathway. May function as a guanine nucleotide exchange (GEF) of RAB5B, required for activating the RAB5 proteins by exchanging bound GDP for free GTP. This chain is Ras and Rab interactor 2 (RIN2), found in Homo sapiens (Human).